Consider the following 312-residue polypeptide: Olfactory receptor 1500 (312 aa).

The Extracellular portion of the chain corresponds to 1 to 25 (MTGNNQTLILEFLLLGLPIPSEYHL). Residue Asn5 is glycosylated (N-linked (GlcNAc...) asparagine). The helical transmembrane segment at 26 to 49 (LFYALFLAMYLTIILGNLLIIVLV) threads the bilayer. At 50 to 57 (RLDSHLHM) the chain is on the cytoplasmic side. Residues 58–79 (PMYLFLSNLSFSDLCFSSVTMP) form a helical membrane-spanning segment. Residues 80–100 (KLLQNMQSQVPSISYTGCLTQ) lie on the Extracellular side of the membrane. Cys97 and Cys189 are disulfide-bonded. Residues 101–120 (LYFFMVFGDMESFLLVVMAY) form a helical membrane-spanning segment. Over 121-139 (DRYVAICFPLRYTTIMSTK) the chain is Cytoplasmic. A helical membrane pass occupies residues 140–158 (FCASLVLLLWMLTMTHALL). The Extracellular segment spans residues 159 to 196 (HTLLIARLSFCEKNVILHFFCDISALLKLSCSDIYVNE). The helical transmembrane segment at 197–219 (LMIYILGGLIIIIPFLLIVMSYV) threads the bilayer. Over 220 to 236 (RIFFSILKFPSIQDIYK) the chain is Cytoplasmic. A helical transmembrane segment spans residues 237–260 (VFSTCGSHLSVVTLFYGTIFGIYL). The Extracellular segment spans residues 261 to 272 (CPSGNNSTVKEI). Residues 273-292 (AMAMMYTVVTPMLNPFIYSL) form a helical membrane-spanning segment. Over 293–312 (RNRDMKRALIRVICTKKISL) the chain is Cytoplasmic.

This sequence belongs to the G-protein coupled receptor 1 family. Olfactory epithelium.

Its subcellular location is the cell membrane. Functionally, odorant receptor. The protein is Olfactory receptor 1500 (Olr1500) of Rattus norvegicus (Rat).